The primary structure comprises 687 residues: Ferric vibriobactin receptor ViuA (687 aa).

The first 37 residues, 1 to 37, serve as a signal peptide directing secretion; that stretch reads MAVLCPARVSVAENKKFKLHTLSAMMMGLFTGSFAYA. A TBDR plug domain is found at 62–184; it reads SIYETSASVE…SAGAIVMKSN (123 aa). The region spanning 189-687 is the TBDR beta-barrel domain; the sequence is HFESAVKAGI…MIGASVQLNF (499 aa).

This sequence belongs to the TonB-dependent receptor family.

Its subcellular location is the cell outer membrane. Involved in the uptake of iron in complex with vibriobactin, a catecholate siderophore synthesized by V.cholerae. Binds and transports ferric vibriobactin across the outer membrane. The energy source is provided by the inner membrane TonB system. In Vibrio cholerae serotype O1 (strain ATCC 39541 / Classical Ogawa 395 / O395), this protein is Ferric vibriobactin receptor ViuA.